The primary structure comprises 465 residues: Cysteine--tRNA ligase (465 aa).

Residue cysteine 30 coordinates Zn(2+). The 'HIGH' region motif lies at 32–42; it reads ITVYDYCHIGH. 3 residues coordinate Zn(2+): cysteine 214, histidine 239, and glutamate 243. Residues 271–275 carry the 'KMSKS' region motif; the sequence is KMSKS. An ATP-binding site is contributed by lysine 274.

This sequence belongs to the class-I aminoacyl-tRNA synthetase family. In terms of assembly, monomer. The cofactor is Zn(2+).

It is found in the cytoplasm. It carries out the reaction tRNA(Cys) + L-cysteine + ATP = L-cysteinyl-tRNA(Cys) + AMP + diphosphate. The polypeptide is Cysteine--tRNA ligase (Burkholderia thailandensis (strain ATCC 700388 / DSM 13276 / CCUG 48851 / CIP 106301 / E264)).